We begin with the raw amino-acid sequence, 652 residues long: Regulator of DNA class I crossover intermediates 1 (652 aa).

The binds DNA containing a D-loop DNA-binding region spans 1–228; sequence MNWVGGSRSR…APYKRTNSSE (228 aa). Disordered stretches follow at residues 464–512 and 621–652; these read YLES…KATE and EKES…SNSL. Residues 467 to 477 show a composition bias toward low complexity; it reads SSQSSQSASYS. Polar residues-rich tracts occupy residues 478–491 and 639–652; these read PRPT…STDL and DTTG…SNSL.

As to quaternary structure, interacts with MSH5. Interacts with TEX11. As to expression, expressed mainly in testis (at protein level). Expressed in spermatogonia and enriched in spermatocytes; absent in testicular somatic cells (at protein level). No expression or low levels in other tissues.

Its subcellular location is the chromosome. Its function is as follows. Involved in recombination, probably acting by stabilizing recombination intermediates during meiotic crossover formation. Required for normal germline development and fertility. Required for meiotic progression, complete chromosomal synapsis and crossover formation. Binds double-stranded DNA. However, also binds branched DNA molecules, such as those containing a D-loop or Holliday junction structure. Probably not required for formation of DNA double-strand breaks (DSBs). Also binds RNA in an RNA structure-independent manner, with a preference for binding 3'-UTR regions of mRNAs; may stabilize bound RNAs. The sequence is that of Regulator of DNA class I crossover intermediates 1 from Mus musculus (Mouse).